The primary structure comprises 223 residues: Phosphoribosylformylglycinamidine synthase subunit PurQ (223 aa).

A Glutamine amidotransferase type-1 domain is found at 3-223 (SAVILLPGLN…LFAGALGITA (221 aa)). Residue C87 is the Nucleophile of the active site. Residues H197 and E199 contribute to the active site.

As to quaternary structure, part of the FGAM synthase complex composed of 1 PurL, 1 PurQ and 2 PurS subunits.

It localises to the cytoplasm. It catalyses the reaction N(2)-formyl-N(1)-(5-phospho-beta-D-ribosyl)glycinamide + L-glutamine + ATP + H2O = 2-formamido-N(1)-(5-O-phospho-beta-D-ribosyl)acetamidine + L-glutamate + ADP + phosphate + H(+). The catalysed reaction is L-glutamine + H2O = L-glutamate + NH4(+). It participates in purine metabolism; IMP biosynthesis via de novo pathway; 5-amino-1-(5-phospho-D-ribosyl)imidazole from N(2)-formyl-N(1)-(5-phospho-D-ribosyl)glycinamide: step 1/2. Part of the phosphoribosylformylglycinamidine synthase complex involved in the purines biosynthetic pathway. Catalyzes the ATP-dependent conversion of formylglycinamide ribonucleotide (FGAR) and glutamine to yield formylglycinamidine ribonucleotide (FGAM) and glutamate. The FGAM synthase complex is composed of three subunits. PurQ produces an ammonia molecule by converting glutamine to glutamate. PurL transfers the ammonia molecule to FGAR to form FGAM in an ATP-dependent manner. PurS interacts with PurQ and PurL and is thought to assist in the transfer of the ammonia molecule from PurQ to PurL. The protein is Phosphoribosylformylglycinamidine synthase subunit PurQ of Brucella abortus biovar 1 (strain 9-941).